The sequence spans 375 residues: Erythronate-4-phosphate dehydrogenase (375 aa).

Substrate is bound by residues serine 45 and threonine 66. Residues aspartate 146, threonine 175, 206–208, and aspartate 232 contribute to the NAD(+) site; that span reads ASR. The active site involves arginine 208. The active site involves glutamate 237. The active-site Proton donor is histidine 254. Glycine 257 contacts NAD(+). Tyrosine 258 contacts substrate.

It belongs to the D-isomer specific 2-hydroxyacid dehydrogenase family. PdxB subfamily. In terms of assembly, homodimer.

The protein resides in the cytoplasm. The catalysed reaction is 4-phospho-D-erythronate + NAD(+) = (R)-3-hydroxy-2-oxo-4-phosphooxybutanoate + NADH + H(+). Its pathway is cofactor biosynthesis; pyridoxine 5'-phosphate biosynthesis; pyridoxine 5'-phosphate from D-erythrose 4-phosphate: step 2/5. Catalyzes the oxidation of erythronate-4-phosphate to 3-hydroxy-2-oxo-4-phosphonooxybutanoate. The protein is Erythronate-4-phosphate dehydrogenase of Photorhabdus laumondii subsp. laumondii (strain DSM 15139 / CIP 105565 / TT01) (Photorhabdus luminescens subsp. laumondii).